A 473-amino-acid polypeptide reads, in one-letter code: Tryptophanase (473 aa).

The residue at position 270 (lysine 270) is an N6-(pyridoxal phosphate)lysine.

It belongs to the beta-eliminating lyase family. As to quaternary structure, homotetramer. It depends on pyridoxal 5'-phosphate as a cofactor.

It catalyses the reaction L-tryptophan + H2O = indole + pyruvate + NH4(+). It participates in amino-acid degradation; L-tryptophan degradation via pyruvate pathway; indole and pyruvate from L-tryptophan: step 1/1. The sequence is that of Tryptophanase from Vibrio vulnificus (strain CMCP6).